A 240-amino-acid chain; its full sequence is Probable septum site-determining protein MinC (240 aa).

It belongs to the MinC family. In terms of assembly, interacts with MinD and FtsZ.

Cell division inhibitor that blocks the formation of polar Z ring septums. Rapidly oscillates between the poles of the cell to destabilize FtsZ filaments that have formed before they mature into polar Z rings. Prevents FtsZ polymerization. In Acinetobacter baumannii (strain ACICU), this protein is Probable septum site-determining protein MinC.